The following is a 373-amino-acid chain: Schlafen-like protein 1 (373 aa).

The tract at residues 1–67 is disordered; the sequence is MAALFEENDS…ELSSEEVDIP (67 aa). Residues 247–373 are SLFN-like fold; the sequence is KAGAKIEFRT…NQVYRLESSV (127 aa).

It belongs to the Schlafen family. Component of the trimeric PUCH (precursor of 21U RNA 5'-end cleavage holoenzyme) complex; consisting of tofu-1, tofu-2 and either slfl-3 or slfl-4; which is required for processing of piRNA precursors. Within the complex, interacts (via N-terminus) with tofu-2 (via N-terminus); the interaction stabilizes tofu-2 and may form a functional nuclease. Within the complex, required for the interaction of tofu-2 (via N-terminus) with slfl-3 (via N-terminus). Interacts (via residues 82-172) with the PETISCO complex subunit tofu-6 (via residues 120-314); the interaction between the PETISCO and PUCH complex members enhances piRNA production in vivo. As to expression, expressed in the germline.

Its subcellular location is the cytoplasm. Functionally, component of the trimeric PUCH (precursor of 21U RNA 5'-end cleavage holoenzyme) complex, that acts as an endoribonuclease processing the 5'-end of precursor Piwi-interacting RNAs (piRNAs). The PUCH complex consists of tofu-1, tofu-2 and either slfl-3 or slfl-4, with tofu-2 exhibiting endoribonuclease activity. PUCH-mediated processing strictly requires a 7-methyl-G cap (m7 G-cap) and an uracil at position three (U3). PUCH also exhibits a strict bias for piRNA precursors with an A or G at position 1. Mature piRNA production is enhanced by the interaction of PUCH with the PETISCO complex, which is stabilizing piRNA precursors and allows their processing by PUCH. In Caenorhabditis elegans, this protein is Schlafen-like protein 1.